The following is a 371-amino-acid chain: Probable trehalose-phosphate phosphatase 1 (371 aa).

It belongs to the trehalose phosphatase family. The cofactor is a divalent metal cation. Expressed in roots and shoots.

The enzyme catalyses alpha,alpha-trehalose 6-phosphate + H2O = alpha,alpha-trehalose + phosphate. The protein operates within glycan biosynthesis; trehalose biosynthesis. In terms of biological role, removes the phosphate from trehalose 6-phosphate to produce free trehalose. Trehalose accumulation in plant improves abiotic stress tolerance. The protein is Probable trehalose-phosphate phosphatase 1 (TPP1) of Oryza sativa subsp. japonica (Rice).